Here is a 346-residue protein sequence, read N- to C-terminus: Uroporphyrinogen decarboxylase (346 aa).

Residues 23–27, Asp72, Tyr155, Ser209, and His322 each bind substrate; that span reads RQAGR.

It belongs to the uroporphyrinogen decarboxylase family. Homodimer.

It localises to the cytoplasm. The catalysed reaction is uroporphyrinogen III + 4 H(+) = coproporphyrinogen III + 4 CO2. Its pathway is porphyrin-containing compound metabolism; protoporphyrin-IX biosynthesis; coproporphyrinogen-III from 5-aminolevulinate: step 4/4. Catalyzes the decarboxylation of four acetate groups of uroporphyrinogen-III to yield coproporphyrinogen-III. In Anaeromyxobacter dehalogenans (strain 2CP-C), this protein is Uroporphyrinogen decarboxylase.